Reading from the N-terminus, the 156-residue chain is ATP synthase subunit b (156 aa).

Residues 7 to 29 (LLGQAIAFALFVWFCMKYVWPPI) traverse the membrane as a helical segment.

It belongs to the ATPase B chain family. As to quaternary structure, F-type ATPases have 2 components, F(1) - the catalytic core - and F(0) - the membrane proton channel. F(1) has five subunits: alpha(3), beta(3), gamma(1), delta(1), epsilon(1). F(0) has three main subunits: a(1), b(2) and c(10-14). The alpha and beta chains form an alternating ring which encloses part of the gamma chain. F(1) is attached to F(0) by a central stalk formed by the gamma and epsilon chains, while a peripheral stalk is formed by the delta and b chains.

The protein resides in the cell inner membrane. F(1)F(0) ATP synthase produces ATP from ADP in the presence of a proton or sodium gradient. F-type ATPases consist of two structural domains, F(1) containing the extramembraneous catalytic core and F(0) containing the membrane proton channel, linked together by a central stalk and a peripheral stalk. During catalysis, ATP synthesis in the catalytic domain of F(1) is coupled via a rotary mechanism of the central stalk subunits to proton translocation. Functionally, component of the F(0) channel, it forms part of the peripheral stalk, linking F(1) to F(0). The protein is ATP synthase subunit b of Aliivibrio salmonicida (strain LFI1238) (Vibrio salmonicida (strain LFI1238)).